The primary structure comprises 903 residues: Protein translocase subunit SecA (903 aa).

Residues glutamine 87, 105 to 109 (GEGKT), and aspartate 507 each bind ATP. Disordered stretches follow at residues 565–584 (ESRRIDNQLRGRSGRQGDPG) and 855–877 (AEPGSALGDDEDNPLSPEALASQ). The Zn(2+) site is built by cysteine 887, cysteine 889, cysteine 898, and histidine 899.

This sequence belongs to the SecA family. In terms of assembly, monomer and homodimer. Part of the essential Sec protein translocation apparatus which comprises SecA, SecYEG and auxiliary proteins SecDF-YajC and YidC. It depends on Zn(2+) as a cofactor.

Its subcellular location is the cell inner membrane. It localises to the cytoplasm. The catalysed reaction is ATP + H2O + cellular proteinSide 1 = ADP + phosphate + cellular proteinSide 2.. Functionally, part of the Sec protein translocase complex. Interacts with the SecYEG preprotein conducting channel. Has a central role in coupling the hydrolysis of ATP to the transfer of proteins into and across the cell membrane, serving both as a receptor for the preprotein-SecB complex and as an ATP-driven molecular motor driving the stepwise translocation of polypeptide chains across the membrane. This is Protein translocase subunit SecA from Chromobacterium violaceum (strain ATCC 12472 / DSM 30191 / JCM 1249 / CCUG 213 / NBRC 12614 / NCIMB 9131 / NCTC 9757 / MK).